Consider the following 256-residue polypeptide: Hydroxyacylglutathione hydrolase (256 aa).

7 residues coordinate Zn(2+): His-58, His-60, Asp-62, His-63, His-116, Asp-135, and His-173.

The protein belongs to the metallo-beta-lactamase superfamily. Glyoxalase II family. In terms of assembly, monomer. It depends on Zn(2+) as a cofactor.

The enzyme catalyses an S-(2-hydroxyacyl)glutathione + H2O = a 2-hydroxy carboxylate + glutathione + H(+). The protein operates within secondary metabolite metabolism; methylglyoxal degradation; (R)-lactate from methylglyoxal: step 2/2. Functionally, thiolesterase that catalyzes the hydrolysis of S-D-lactoyl-glutathione to form glutathione and D-lactic acid. The chain is Hydroxyacylglutathione hydrolase from Hyphomonas neptunium (strain ATCC 15444).